Consider the following 74-residue polypeptide: Major structural pilin EpdE (74 aa).

Positions 1-12 (MKFLEKLTSKKG) are excised as a propeptide. Gln-13 carries the pyrrolidone carboxylic acid modification. Residues 13 to 21 (QIAMELGIL) carry the QXSXEXXXL motif.

Post-translationally, the N-terminus is cleaved by the prepilin peptidase EppA, which recognizes the class III signal sequence. N-glycosylated. Glycosylated with an N-linked branched pentasaccharide glycan. May contain glycans at three sites. Glycosylation is AglB-dependent. The N-glycosylation does not occur unless the signal peptide has been cleaved first.

It localises to the secreted. The protein resides in the cell surface. The protein localises to the fimbrium. Functionally, major component of the type IV-like pili. This is Major structural pilin EpdE from Methanococcus maripaludis (strain DSM 14266 / JCM 13030 / NBRC 101832 / S2 / LL).